The chain runs to 335 residues: Glyceraldehyde-3-phosphate dehydrogenase (335 aa).

NAD(+)-binding positions include R12 to I13, D34, R78, and S120. D-glyceraldehyde 3-phosphate is bound by residues S151–T153 and T182. C152 serves as the catalytic Nucleophile. NAD(+) is bound at residue N183. Residues R197, T210–G211, and R233 each bind D-glyceraldehyde 3-phosphate. N315 is a binding site for NAD(+).

Belongs to the glyceraldehyde-3-phosphate dehydrogenase family. In terms of assembly, homotetramer.

The protein localises to the cytoplasm. It catalyses the reaction D-glyceraldehyde 3-phosphate + phosphate + NAD(+) = (2R)-3-phospho-glyceroyl phosphate + NADH + H(+). Its pathway is carbohydrate degradation; glycolysis; pyruvate from D-glyceraldehyde 3-phosphate: step 1/5. Its function is as follows. Catalyzes the oxidative phosphorylation of glyceraldehyde 3-phosphate (G3P) to 1,3-bisphosphoglycerate (BPG) using the cofactor NAD. The first reaction step involves the formation of a hemiacetal intermediate between G3P and a cysteine residue, and this hemiacetal intermediate is then oxidized to a thioester, with concomitant reduction of NAD to NADH. The reduced NADH is then exchanged with the second NAD, and the thioester is attacked by a nucleophilic inorganic phosphate to produce BPG. In Priestia megaterium (strain DSM 319 / IMG 1521) (Bacillus megaterium), this protein is Glyceraldehyde-3-phosphate dehydrogenase (gap).